Reading from the N-terminus, the 262-residue chain is Zinc import ATP-binding protein ZnuC (262 aa).

Residues 5-220 (VSLEQLCVEF…PSYIALFGNA (216 aa)) form the ABC transporter domain. 37 to 44 (GPNGAGKS) lines the ATP pocket. Residues 236–262 (HHDLSGSPVSGDATSCSNHNHGHHHHD) form a disordered region.

It belongs to the ABC transporter superfamily. Zinc importer (TC 3.A.1.15.5) family. In terms of assembly, the complex is composed of two ATP-binding proteins (ZnuC), two transmembrane proteins (ZnuB) and a solute-binding protein (ZnuA).

It localises to the cell inner membrane. The catalysed reaction is Zn(2+)(out) + ATP(in) + H2O(in) = Zn(2+)(in) + ADP(in) + phosphate(in) + H(+)(in). Part of the ABC transporter complex ZnuABC involved in zinc import. Responsible for energy coupling to the transport system. The chain is Zinc import ATP-binding protein ZnuC from Vibrio parahaemolyticus serotype O3:K6 (strain RIMD 2210633).